Reading from the N-terminus, the 150-residue chain is UPF0178 protein Shew_2726 (150 aa).

The protein belongs to the UPF0178 family.

This is UPF0178 protein Shew_2726 from Shewanella loihica (strain ATCC BAA-1088 / PV-4).